A 372-amino-acid polypeptide reads, in one-letter code: 3 beta-hydroxysteroid dehydrogenase/Delta 5--&gt;4-isomerase type 2 (372 aa).

The Proton acceptor role is filled by Tyr154. Lys158 lines the NAD(+) pocket. Residues 287–307 (LTLMYWIGFLLEVVSFLLSPI) form a helical membrane-spanning segment.

The protein belongs to the 3-beta-HSD family. In terms of tissue distribution, expressed in adrenal gland, testis and ovary.

It is found in the endoplasmic reticulum membrane. Its subcellular location is the mitochondrion membrane. The catalysed reaction is a 3beta-hydroxy-Delta(5)-steroid + NAD(+) = a 3-oxo-Delta(5)-steroid + NADH + H(+). The enzyme catalyses a 3-oxo-Delta(5)-steroid = a 3-oxo-Delta(4)-steroid. It carries out the reaction pregnenolone + NAD(+) = pregn-5-ene-3,20-dione + NADH + H(+). It catalyses the reaction pregn-5-ene-3,20-dione = progesterone. The catalysed reaction is 3beta-hydroxyandrost-5-en-17-one + NAD(+) = androst-5-ene-3,17-dione + NADH + H(+). The enzyme catalyses androst-5-ene-3,17-dione = androst-4-ene-3,17-dione. Its pathway is lipid metabolism; steroid biosynthesis. 3-beta-HSD is a bifunctional enzyme, that catalyzes the oxidative conversion of Delta(5)-ene-3-beta-hydroxy steroid, and the oxidative conversion of ketosteroids. The 3-beta-HSD enzymatic system plays a crucial role in the biosynthesis of all classes of hormonal steroids. In Homo sapiens (Human), this protein is 3 beta-hydroxysteroid dehydrogenase/Delta 5--&gt;4-isomerase type 2.